The primary structure comprises 951 residues: MLLVMVRSSTISPKSLRLYCSGHIIDSLRHSISRWNSPSGYCSNYYFSKRKHKRHFTSSVLSPVTPIVHNLFDELPERENRTMESSFMFLRDVLRSFMMRTETETPRSVHCFALKCGLLQDLATSSKLLTFYGRTGELVSSSCLFDELKEKDVIVWNSMITALNQNGRYIAAVGLFIEMIHKGNEFDSTTLLLAASALSSLHLSRKCSMLHCLAIETGLVGDSSLCNALMNLYAKGENLSSAECVFTHMEHRDIVSWNTIMTKCLANGHPRKSLQYFKSMTGSGQEADTVTFSCVISACSSIEELTLGESLHGLVIKSGYSPEAHVSVGNSIISMYSKCGDTEAAETVFEELVCRDVISSNAILNGFAANGMFEEAFGILNQMQSVDKIQPDIATVVSITSICGDLSFSREGRAVHGYTVRMEMQSRALEVINSVIDMYGKCGLTTQAELLFKTTTHRDLVSWNSMISAFSQNGFTHKAKNLFKEVVSEYSCSKFSLSTVLAILTSCDSSDSLIFGKSVHCWLQKLGFGDNMLSANSVINMYIGCRDLTSAFLRLETMSETRDLTSWNSVISGCASSGHHLESLRAFQAMSREGKIRHDLITLLGTISASGNLGLVLQGRCFHGLAIKSLRELDTQLQNTLITMYGRCKDIESAVKVFGLISDPNLCSWNCVISALSQNKAGREVFQLFRNLKLEPNEITFVGLLSASTQLGSTSYGMQAHCHLIRRGFQANPFVSAALVDMYSSCGMLETGMKVFRNSGVNSISAWNSVISAHGFHGMGEKAMELFKELSSNSEMEPNKSSFISLLSACSHSGFIDEGLSYYKQMEEKFGVKPVTEHRVWIVDMLGRAGKLREAYEFITGIGEPQKAGVWGALLSACNYHGDTKLGKEVAEVLFEMEPDNASYYISLANTYVGLGGWEEAVRLRKMVEDNALKKLPGYSVIDVRCLDTVS.

A mitochondrion-targeting transit peptide spans 1–63 (MLLVMVRSST…RHFTSSVLSP (63 aa)). PPR repeat units follow at residues 121 to 151 (DLATSSKLLTFYGRTGELVSSSCLFDELKEK), 152 to 186 (DVIVWNSMITALNQNGRYIAAVGLFIEMIHKGNEF), 187 to 221 (DSTTLLLAASALSSLHLSRKCSMLHCLAIETGLVG), 222 to 252 (DSSLCNALMNLYAKGENLSSAECVFTHMEHR), 253 to 287 (DIVSWNTIMTKCLANGHPRKSLQYFKSMTGSGQEA), 288 to 322 (DTVTFSCVISACSSIEELTLGESLHGLVIKSGYSP), 325 to 355 (HVSVGNSIISMYSKCGDTEAAETVFEELVCR), 356 to 386 (DVISSNAILNGFAANGMFEEAFGILNQMQSV), 392 to 426 (DIATVVSITSICGDLSFSREGRAVHGYTVRMEMQS), 428 to 458 (ALEVINSVIDMYGKCGLTTQAELLFKTTTHR), 459 to 489 (DLVSWNSMISAFSQNGFTHKAKNLFKEVVSE), 496 to 530 (SLSTVLAILTSCDSSDSLIFGKSVHCWLQKLGFGD), 531 to 561 (NMLSANSVINMYIGCRDLTSAFLRLETMSET), 563 to 597 (DLTSWNSVISGCASSGHHLESLRAFQAMSREGKIR), 599 to 629 (DLITLLGTISASGNLGLVLQGRCFHGLAIKS), 634 to 668 (DTQLQNTLITMYGRCKDIESAVKVFGLISDPNLCS), 669 to 695 (WNCVISALSQNKAGREVFQLFRNLKLE), 697 to 731 (NEITFVGLLSASTQLGSTSYGMQAHCHLIRRGFQA), 732 to 762 (NPFVSAALVDMYSSCGMLETGMKVFRNSGVN), 763 to 793 (SISAWNSVISAHGFHGMGEKAMELFKELSSN), 799 to 829 (NKSSFISLLSACSHSGFIDEGLSYYKQMEEK), and 835 to 865 (VTEHRVWIVDMLGRAGKLREAYEFITGIGEP). A type E motif region spans residues 870–945 (VWGALLSACN…LPGYSVIDVR (76 aa)).

Belongs to the PPR family. PCMP-E subfamily.

It is found in the mitochondrion. This is Pentatricopeptide repeat-containing protein At4g19220, mitochondrial (PCMP-E2) from Arabidopsis thaliana (Mouse-ear cress).